We begin with the raw amino-acid sequence, 78 residues long: Large ribosomal subunit protein bL31 (78 aa).

This sequence belongs to the bacterial ribosomal protein bL31 family. Type A subfamily. In terms of assembly, part of the 50S ribosomal subunit.

Functionally, binds the 23S rRNA. This is Large ribosomal subunit protein bL31 (rpmE) from Rickettsia typhi (strain ATCC VR-144 / Wilmington).